The following is a 332-amino-acid chain: D-lactate dehydrogenase (332 aa).

NAD(+) contacts are provided by residues 155-156 (RI), D175, 206-207 (VP), N212, and 233-235 (FAR). Residues R235 and E264 contribute to the active site. The active-site Proton donor is H296.

This sequence belongs to the D-isomer specific 2-hydroxyacid dehydrogenase family. In terms of assembly, homodimer.

It catalyses the reaction (R)-lactate + NAD(+) = pyruvate + NADH + H(+). The sequence is that of D-lactate dehydrogenase from Lactiplantibacillus pentosus (Lactobacillus pentosus).